A 2731-amino-acid chain; its full sequence is Teneurin-m (2731 aa).

2 disordered regions span residues 1–60 (MNPY…QNQQ) and 103–136 (LLEG…NNPN). Topologically, residues 1-229 (MNPYEYESTL…RKDLVARCSS (229 aa)) are cytoplasmic. Positions 110 to 119 (TAPPDVPPRN) are enriched in pro residues. Residues 120–136 (PTMSRMQNGRLTVNNPN) show a composition bias toward polar residues. Residues 230–250 (PWFGIGSISVLFAFVVMLILL) form a helical membrane-spanning segment. Over 251-2731 (TTTGVIKWNQ…RQLKFGELSA (2481 aa)) the chain is Extracellular. The segment at 321 to 387 (SSAATVTTAT…RTFPARSFPP (67 aa)) is disordered. Positions 322–370 (SAATVTTATSNSGTAQGLQSTSASAEATSSAATSSSQSSLTPSLSSSLA) are enriched in low complexity. EGF-like domains lie at 536-572 (GGDD…KECS), 574-606 (RHDE…KFCE), 643-676 (DALQ…DDCS), and 738-774 (TIEG…PDCG). Disulfide bonds link Cys540–Cys549, Cys545–Cys560, Cys562–Cys571, Cys578–Cys589, Cys583–Cys594, Cys596–Cys605, Cys651–Cys664, Cys666–Cys675, Cys742–Cys752, Cys746–Cys762, and Cys764–Cys773. A glycan (N-linked (GlcNAc...) asparagine) is linked at Asn857. NHL repeat units lie at residues 1160–1201 (ECPD…IMTD), 1202–1246 (GSIR…VRDT), 1391–1434 (STAY…VRVI), and 1459–1502 (CFEA…VMSS). The stretch at 1618-1652 (TGLLRTKLDSTGRSYVYNYDEFGRLTSAVTPTGRV) is one YD repeat. Residues 2691 to 2731 (LADDPGNVAFQRDAKRKRRKTGSSHRSASNRRQLKFGELSA) are disordered. The segment covering 2704-2724 (AKRKRRKTGSSHRSASNRRQL) has biased composition (basic residues).

The protein belongs to the tenascin family. Teneurin subfamily. In terms of assembly, homodimer. Heterodimer with Ten-a. Interacts with Ten-a; the interaction occurs at the neuromuscular junction. Interacts with alpha-Spec and cher. Phosphorylated. Phosphorylation occurs at tyrosine residues. Post-translationally, proteolytically cleaved. Expressed in muscles and motor neurons (at protein level).

It is found in the cytoplasm. Its subcellular location is the postsynaptic cell membrane. The protein resides in the synapse. It localises to the synaptosome. The protein localises to the membrane. Functionally, involved in neural development, regulating the establishment of proper connectivity within the nervous system. Acts as a homophilic and heterophilic synaptic cell adhesion molecule that drives synapse assembly. Promotes bi-directional trans-synaptic signaling with Ten-a to organize neuromuscular synapses. Functions in olfactory synaptic partner matching by promoting homophilic cell adhesion between pre-synaptic olfactory receptor neurons (ORN) axons and post-synaptic projection neurons (PN) dendrites partner in the developing antennal lobe to form stable connections. Also required for peripheral axon growth cone guidance and target recognition of motor neurons. This Drosophila melanogaster (Fruit fly) protein is Teneurin-m (Ten-m).